Reading from the N-terminus, the 267-residue chain is MALNDNPIPKSVPLHPKSGKYFHNLHARDLSNIYQQCYKQIDETINQLVDSTSPSTIGIEEQVADITSTYKLLSTYESESNSFDEHIKDLKKNFKQSSDACPQIDLSTWDKYRTGELTAPKLSELYLNMPTPEPATMVNNTDTLKILKVLPYIWNDPTCVIPDLQNPADEDDLQIEGGKIELTCPITCKPYEAPLISRKCNHVFDRDGIQNYLQGYTTRDCPQAACSQVVSMRDFVRDPIMELRCKIAKMKESQEQDKRSSQAIDVL.

The SP-RING-type zinc finger occupies 169–256 (DEDDLQIEGG…IAKMKESQEQ (88 aa)). The Zn(2+) site is built by Cys-200, His-202, Cys-221, and Cys-226.

The protein belongs to the NSE2 family. As to quaternary structure, component of the Smc5-Smc6 complex which consists of KRE29, NSE1, NSE2/MMS21, NSE3, NSE4, NSE5, SMC5 and SMC6.

The protein localises to the nucleus. It is found in the cytoplasm. Its pathway is protein modification; protein sumoylation. In terms of biological role, acts as an E3 ligase mediating SUMO/Smt3 attachment to SMC5 and YKU70. Acts in a DNA repair pathway for removal of UV-induced DNA damage that is distinct from classical nucleotide excision repair and in repair of ionizing radiation damage. Functions in homologous recombination repair of DNA double strand breaks and in recovery of stalled replication forks. The polypeptide is E3 SUMO-protein ligase MMS21 (MMS21) (Saccharomyces cerevisiae (strain ATCC 204508 / S288c) (Baker's yeast)).